A 715-amino-acid polypeptide reads, in one-letter code: Fatty acid oxidation complex subunit alpha (715 aa).

The segment at 1 to 190 (MDMTSAFTLN…RVGLVDEVVP (190 aa)) is enoyl-CoA hydratase. Residues 306–715 (GPLASVGVLG…WNSGETDLKE (410 aa)) form a 3-hydroxyacyl-CoA dehydrogenase region.

This sequence in the N-terminal section; belongs to the enoyl-CoA hydratase/isomerase family. It in the central section; belongs to the 3-hydroxyacyl-CoA dehydrogenase family. As to quaternary structure, heterotetramer of two alpha chains (FadJ) and two beta chains (FadI).

It localises to the cytoplasm. It catalyses the reaction a (3S)-3-hydroxyacyl-CoA = a (2E)-enoyl-CoA + H2O. The catalysed reaction is a 4-saturated-(3S)-3-hydroxyacyl-CoA = a (3E)-enoyl-CoA + H2O. The enzyme catalyses a (3S)-3-hydroxyacyl-CoA + NAD(+) = a 3-oxoacyl-CoA + NADH + H(+). It carries out the reaction (3S)-3-hydroxybutanoyl-CoA = (3R)-3-hydroxybutanoyl-CoA. The protein operates within lipid metabolism; fatty acid beta-oxidation. Functionally, catalyzes the formation of a hydroxyacyl-CoA by addition of water on enoyl-CoA. Also exhibits 3-hydroxyacyl-CoA epimerase and 3-hydroxyacyl-CoA dehydrogenase activities. The polypeptide is Fatty acid oxidation complex subunit alpha (Citrobacter koseri (strain ATCC BAA-895 / CDC 4225-83 / SGSC4696)).